The following is a 95-amino-acid chain: Aspartyl/glutamyl-tRNA(Asn/Gln) amidotransferase subunit C (95 aa).

This sequence belongs to the GatC family. Heterotrimer of A, B and C subunits.

The enzyme catalyses L-glutamyl-tRNA(Gln) + L-glutamine + ATP + H2O = L-glutaminyl-tRNA(Gln) + L-glutamate + ADP + phosphate + H(+). The catalysed reaction is L-aspartyl-tRNA(Asn) + L-glutamine + ATP + H2O = L-asparaginyl-tRNA(Asn) + L-glutamate + ADP + phosphate + 2 H(+). In terms of biological role, allows the formation of correctly charged Asn-tRNA(Asn) or Gln-tRNA(Gln) through the transamidation of misacylated Asp-tRNA(Asn) or Glu-tRNA(Gln) in organisms which lack either or both of asparaginyl-tRNA or glutaminyl-tRNA synthetases. The reaction takes place in the presence of glutamine and ATP through an activated phospho-Asp-tRNA(Asn) or phospho-Glu-tRNA(Gln). The sequence is that of Aspartyl/glutamyl-tRNA(Asn/Gln) amidotransferase subunit C from Xanthobacter autotrophicus (strain ATCC BAA-1158 / Py2).